We begin with the raw amino-acid sequence, 1933 residues long: WD repeat-containing protein 81 (1933 aa).

The interval Met-1–Glu-643 is necessary and sufficient for the interaction with SQSTM1. Disordered stretches follow at residues Pro-305–Cys-334, Ser-663–Val-714, Cys-1038–Gly-1057, Gln-1090–Glu-1209, Ser-1517–Gln-1544, and Asp-1565–Glu-1590. Residues Ser-314 to Gly-330 show a composition bias toward basic and acidic residues. In terms of domain architecture, BEACH spans Gly-333–Gln-610. A compositionally biased stretch (low complexity) spans Ala-668–Arg-693. Polar residues-rich tracts occupy residues Gly-1100–Ser-1112 and Val-1131–Leu-1140. The span at Gly-1145–Glu-1166 shows a compositional bias: acidic residues. WD repeat units follow at residues Gly-1638–Ser-1677, Ile-1684–Thr-1724, Leu-1776–Gly-1815, Ala-1818–His-1856, and Asn-1903–Ala-1933.

Belongs to the WD repeat WDR81 family. In terms of assembly, interacts with WDR91; involved in early to late endosome cargo transport. Interacts with BECN1; negatively regulates the PI3 kinase/PI3K activity associated with endosomal membranes. Interacts with SQSTM1; the interaction is direct and regulates the interaction of SQSTM1 with ubiquitinated proteins. Interacts with MAP1LC3C; recruits MAP1LC3C to ubiquitinated protein aggregates in the aggrephagy process.

It localises to the early endosome membrane. Its subcellular location is the late endosome membrane. It is found in the lysosome membrane. The protein localises to the cytoplasmic vesicle. The protein resides in the autophagosome membrane. It localises to the mitochondrion. Its subcellular location is the cytoplasm. It is found in the cytosol. Functions as a negative regulator of the PI3 kinase/PI3K activity associated with endosomal membranes via BECN1, a core subunit of the PI3K complex. By modifying the phosphatidylinositol 3-phosphate/PtdInsP3 content of endosomal membranes may regulate endosome fusion, recycling, sorting and early to late endosome transport. It is for instance, required for the delivery of cargos like BST2/tetherin from early to late endosome and thereby participates indirectly to their degradation by the lysosome. May also play a role in aggrephagy, the macroautophagic degradation of ubiquitinated protein aggregates. In this process, may regulate the interaction of SQSTM1 with ubiquitinated proteins and also recruit MAP1LC3C. May also be involved in maintenance of normal mitochondrial structure and organization. The chain is WD repeat-containing protein 81 from Rattus norvegicus (Rat).